We begin with the raw amino-acid sequence, 96 residues long: Small ribosomal subunit protein bS6 (96 aa).

It belongs to the bacterial ribosomal protein bS6 family.

Binds together with bS18 to 16S ribosomal RNA. In Thermobifida fusca (strain YX), this protein is Small ribosomal subunit protein bS6.